Reading from the N-terminus, the 92-residue chain is Small ribosomal subunit protein bS18 (92 aa).

A disordered region spans residues 1–22 (MADERAPQRSTSGPRKKRPFQR).

The protein belongs to the bacterial ribosomal protein bS18 family. Part of the 30S ribosomal subunit. Forms a tight heterodimer with protein bS6.

Functionally, binds as a heterodimer with protein bS6 to the central domain of the 16S rRNA, where it helps stabilize the platform of the 30S subunit. In Citrifermentans bemidjiense (strain ATCC BAA-1014 / DSM 16622 / JCM 12645 / Bem) (Geobacter bemidjiensis), this protein is Small ribosomal subunit protein bS18.